The primary structure comprises 96 residues: UPF0235 protein VC_0458 (96 aa).

This sequence belongs to the UPF0235 family.

The chain is UPF0235 protein VC_0458 from Vibrio cholerae serotype O1 (strain ATCC 39315 / El Tor Inaba N16961).